Reading from the N-terminus, the 166-residue chain is Coiled-coil domain-containing protein 12 (166 aa).

Methionine 1 bears the N-acetylmethionine mark. Residues 1 to 56 (MEATTAGVGRLEEEALRRKERLKALREKTGRKDKEDGEPKTKHLREEEEEGEKHRE) form a disordered region. Residues 8–28 (VGRLEEEALRRKERLKALREK) are a coiled coil. The span at 10–56 (RLEEEALRRKERLKALREKTGRKDKEDGEPKTKHLREEEEEGEKHRE) shows a compositional bias: basic and acidic residues. An N6-acetyllysine modification is found at lysine 53. Lysine 94 is covalently cross-linked (Glycyl lysine isopeptide (Lys-Gly) (interchain with G-Cter in SUMO2)). Positions 117–144 (KRDVAKKLEKLKKRTQRAIAELIRERLK) form a coiled coil. The disordered stretch occupies residues 147-166 (EDSLASAVDAATEQKTCDSD). Phosphoserine occurs at positions 149 and 165.

The polypeptide is Coiled-coil domain-containing protein 12 (CCDC12) (Homo sapiens (Human)).